Consider the following 261-residue polypeptide: uncharacterized protein (261 aa).

The NADP(+) site is built by Ile-33, Lys-60, Asp-78, and Asn-105. Ser-157 acts as the Proton donor in catalysis. The NADP(+) site is built by Tyr-172, Lys-176, and Thr-206. Tyr-172 (proton acceptor) is an active-site residue. Catalysis depends on Lys-176, which acts as the Lowers pKa of active site Tyr.

It belongs to the short-chain dehydrogenases/reductases (SDR) family.

The protein resides in the cytoplasm. Its subcellular location is the nucleus. This is an uncharacterized protein from Schizosaccharomyces pombe (strain 972 / ATCC 24843) (Fission yeast).